Consider the following 244-residue polypeptide: Phosphoadenosine 5'-phosphosulfate reductase (244 aa).

Residue C239 is the Nucleophile; cysteine thiosulfonate intermediate of the active site.

It belongs to the PAPS reductase family. CysH subfamily.

Its subcellular location is the cytoplasm. The catalysed reaction is [thioredoxin]-disulfide + sulfite + adenosine 3',5'-bisphosphate + 2 H(+) = [thioredoxin]-dithiol + 3'-phosphoadenylyl sulfate. It functions in the pathway sulfur metabolism; hydrogen sulfide biosynthesis; sulfite from sulfate: step 3/3. In terms of biological role, catalyzes the formation of sulfite from phosphoadenosine 5'-phosphosulfate (PAPS) using thioredoxin as an electron donor. In Buchnera aphidicola subsp. Acyrthosiphon pisum (strain Tuc7), this protein is Phosphoadenosine 5'-phosphosulfate reductase.